The sequence spans 230 residues: Ribonuclease 3 (230 aa).

The RNase III domain occupies Tyr-5–Asp-125. Position 40 (Glu-40) interacts with Mg(2+). Asp-44 is an active-site residue. Residues Asp-111 and Glu-114 each coordinate Mg(2+). Glu-114 is an active-site residue. The DRBM domain occupies Asp-153–Gln-223.

This sequence belongs to the ribonuclease III family. In terms of assembly, homodimer. Mg(2+) serves as cofactor.

The protein resides in the cytoplasm. It catalyses the reaction Endonucleolytic cleavage to 5'-phosphomonoester.. In terms of biological role, digests double-stranded RNA. Involved in the processing of primary rRNA transcript to yield the immediate precursors to the large and small rRNAs (23S and 16S). Also processes some mRNAs, and tRNAs when they are encoded in the rRNA operon. CRISPR (clustered regularly interspaced short palindromic repeat) is an adaptive immune system that provides protection against mobile genetic elements (viruses, transposable elements and conjugative plasmids). CRISPR clusters contain spacers, sequences complementary to antecedent mobile elements, and target invading nucleic acids. CRISPR clusters are transcribed and processed into CRISPR RNA (crRNA). In this organism endogenous ribonuclease 3 and Cas9 are required for correct coprocessing of pre-crRNA and the trans-encoded small RNA (tracrRNA). Cas9, crRNA and tracrRNA are required for cleavage of invading DNA. Complements pre-crRNA and tracrRNA coprocessing defects in an rnc deletion in S.pyogenes strain 370. In Francisella tularensis subsp. novicida (strain U112), this protein is Ribonuclease 3.